Reading from the N-terminus, the 212-residue chain is Large ribosomal subunit protein uL1 (212 aa).

Belongs to the universal ribosomal protein uL1 family. Part of the 50S ribosomal subunit.

In terms of biological role, binds directly to 23S rRNA. Probably involved in E site tRNA release. Protein L1 is also a translational repressor protein, it controls the translation of its operon by binding to its mRNA. In Haloarcula marismortui (strain ATCC 43049 / DSM 3752 / JCM 8966 / VKM B-1809) (Halobacterium marismortui), this protein is Large ribosomal subunit protein uL1.